We begin with the raw amino-acid sequence, 155 residues long: Protein-export protein SecB (155 aa).

Belongs to the SecB family. In terms of assembly, homotetramer, a dimer of dimers. One homotetramer interacts with 1 SecA dimer.

Its subcellular location is the cytoplasm. Functionally, one of the proteins required for the normal export of preproteins out of the cell cytoplasm. It is a molecular chaperone that binds to a subset of precursor proteins, maintaining them in a translocation-competent state. It also specifically binds to its receptor SecA. The polypeptide is Protein-export protein SecB (Escherichia coli O127:H6 (strain E2348/69 / EPEC)).